Here is a 552-residue protein sequence, read N- to C-terminus: Antibiotic resistance protein MAB_2355c (552 aa).

ABC transporter domains lie at 4-270 (VQLD…RRWD) and 332-552 (AKRA…PQWV). Residues 37-44 (GPNGTGKT) and 364-371 (GGNGTGKS) each bind ATP.

This sequence belongs to the ABC transporter superfamily. ABCF family.

The enzyme catalyses ATP + H2O = ADP + phosphate + H(+). Its activity is regulated as follows. The ATPase activity can be inhibited by ribosome-targeting antibiotics. Its function is as follows. Exhibits ATP hydrolysis activity and contributes to macrolide resistance by ribosome protection. Can also hydrolyze GTP, TTP and CTP but to a lesser extent than ATP. In vitro, rescues the transcription and translation activities affected by macrolides. Increased expression correlates with increased resistance to clarithromycin, one of the main drugs used to treat M.abscessus. The sequence is that of Antibiotic resistance protein MAB_2355c from Mycobacteroides abscessus (strain ATCC 19977 / DSM 44196 / CCUG 20993 / CIP 104536 / JCM 13569 / NCTC 13031 / TMC 1543 / L948) (Mycobacterium abscessus).